Here is a 525-residue protein sequence, read N- to C-terminus: Sodium-dependent lysophosphatidylcholine symporter 1 (525 aa).

The disordered stretch occupies residues 1 to 29 (MEKESENASCAGLLGQKNEPGSPTQSRSG). Topologically, residues 1–32 (MEKESENASCAGLLGQKNEPGSPTQSRSGKHK) are cytoplasmic. The helical transmembrane segment at 33 to 62 (LSVCSKICFAIGGAPYQITGCALGFFLQIF) threads the bilayer. Topologically, residues 63-73 (LLDIAQVPPFY) are extracellular. Residues 74–94 (ASIILFSGRVWDAITDPLVGF) traverse the membrane as a helical segment. The Cytoplasmic portion of the chain corresponds to 95 to 106 (FVSKSSWTRLGR). Residues 107 to 126 (LLPWVVFSTPFAVVSYLLIW) traverse the membrane as a helical segment. The Extracellular portion of the chain corresponds to 127 to 137 (FVPGFSGVSMV). A helical transmembrane segment spans residues 138-162 (IWYLVFYCLFQTLVTCFHVPYSALT). Residues 163-169 (MFISKEQ) are Cytoplasmic-facing. Residues 170–201 (SDRDSATGYRMTVEVLGTVLGTAIQGQIVGRE) traverse the membrane as a helical segment. Residues 202–226 (NTPCVEHIRETHLYNTSVIMEDLNI) lie on the Extracellular side of the membrane. An intrachain disulfide couples C205 to C458. 2 N-linked (GlcNAc...) asparagine glycosylation sites follow: N216 and N225. Residues 227-260 (THDVESLSSTRDAYMIAAGVICAIYVLCAIILTL) traverse the membrane as a helical segment. The Cytoplasmic segment spans residues 261–291 (GVREKRDAYELLSDQPFSFWQGLKLVMSHKP). Residues 292–318 (YIKLITGFLFTSLAFMLLEGNFALFLT) traverse the membrane as a helical segment. Topologically, residues 319–329 (YTMGFRRDFQN) are extracellular. Residues 330–348 (ILLVVMLSATLTVPFWQWF) form a helical membrane-spanning segment. The Cytoplasmic segment spans residues 349–352 (LTRF). The helical transmembrane segment at 353–374 (GKKTAVYFGISSVIPFLILVVL) threads the bilayer. Residues 375–377 (MES) lie on the Extracellular side of the membrane. A helical membrane pass occupies residues 378–414 (NLILAYVVAVAAGLSVAAAFLLPWSMLPDVIDDFILK). The Cytoplasmic segment spans residues 415–424 (NPDSHGHEPI). A helical transmembrane segment spans residues 425–451 (FFSFYVFFTKFASGVSLGISTLSLDFA). The Extracellular segment spans residues 452–463 (GYQTRACSQPEQ). Residues 464–487 (VNLTLKMLICVAPVILILLGLLLF) form a helical membrane-spanning segment. Residues 488–525 (ILYPINEEKRKQNKKALQLIRESNRDSDSDSLELASNV) lie on the Cytoplasmic side of the membrane.

The protein belongs to the major facilitator superfamily.

The protein resides in the cell membrane. Its subcellular location is the endoplasmic reticulum membrane. The enzyme catalyses a 1-acyl-sn-glycero-3-phosphocholine(in) + Na(+)(in) = a 1-acyl-sn-glycero-3-phosphocholine(out) + Na(+)(out). The catalysed reaction is 1-(4Z,7Z,10Z,13Z,16Z,19Z-docosahexaenoyl)-sn-glycero-3-phosphocholine(in) + Na(+)(in) = 1-(4Z,7Z,10Z,13Z,16Z,19Z-docosahexaenoyl)-sn-glycero-3-phosphocholine(out) + Na(+)(out). It carries out the reaction 1-(9Z-octadecenoyl)-sn-glycero-3-phosphocholine(in) + Na(+)(in) = 1-(9Z-octadecenoyl)-sn-glycero-3-phosphocholine(out) + Na(+)(out). It catalyses the reaction 1-hexadecanoyl-sn-glycero-3-phosphocholine(in) + Na(+)(in) = 1-hexadecanoyl-sn-glycero-3-phosphocholine(out) + Na(+)(out). The enzyme catalyses a 1-acyl-sn-glycero-3-phosphoethanolamine(in) + Na(+)(in) = a 1-acyl-sn-glycero-3-phosphoethanolamine(out) + Na(+)(out). Functionally, sodium-dependent lysophosphatidylcholine (LPC) symporter, which plays an essential role for blood-brain barrier formation and function. Specifically expressed in endothelium of the blood-brain barrier of micro-vessels and transports LPC into the brain. Transport of LPC is essential because it constitutes the major mechanism by which docosahexaenoic acid (DHA), an omega-3 fatty acid that is essential for normal brain growth and cognitive function, enters the brain. Transports LPC carrying long-chain fatty acids such LPC oleate and LPC palmitate with a minimum acyl chain length of 14 carbons. Does not transport docosahexaenoic acid in unesterified fatty acid. The sequence is that of Sodium-dependent lysophosphatidylcholine symporter 1 (mfsd2a) from Xenopus tropicalis (Western clawed frog).